Reading from the N-terminus, the 125-residue chain is Small ribosomal subunit protein uS13 (125 aa).

The disordered stretch occupies residues 93–125 (RSLPVRGQRTRTNARTRKGKRKTVAGKKKAGKK).

The protein belongs to the universal ribosomal protein uS13 family. In terms of assembly, part of the 30S ribosomal subunit. Forms a loose heterodimer with protein S19. Forms two bridges to the 50S subunit in the 70S ribosome.

Its function is as follows. Located at the top of the head of the 30S subunit, it contacts several helices of the 16S rRNA. In the 70S ribosome it contacts the 23S rRNA (bridge B1a) and protein L5 of the 50S subunit (bridge B1b), connecting the 2 subunits; these bridges are implicated in subunit movement. Contacts the tRNAs in the A and P-sites. The chain is Small ribosomal subunit protein uS13 from Chlorobaculum tepidum (strain ATCC 49652 / DSM 12025 / NBRC 103806 / TLS) (Chlorobium tepidum).